The primary structure comprises 357 residues: Pheromone receptor 1 (357 aa).

A run of 7 helical transmembrane segments spans residues 5–25 (ITPFFALVAFFLVLMPFAWHI), 32–52 (LIMLSIWLMLGNLDNFVNSMV), 67–90 (LSVRLRHLLFIAIPASNLAIARKL), 110–130 (VIIDLLICLGIPIIYTSLMIV), 145–165 (WPMMVFSWLWVLLVAAPVIVV), 206–226 (LLLLTAIDMLLFFPIYVGTIA), and 268–288 (LILARLVCPLSAYIFFAMFGL). The interval 338–357 (ANTSTKSEKSDIDMRGSEAA) is disordered. Residues 343 to 357 (KSEKSDIDMRGSEAA) show a composition bias toward basic and acidic residues.

It belongs to the G-protein coupled receptor 4 family.

It is found in the membrane. Functionally, receptor for the A2 pheromone, a prenylated mating factor. This is Pheromone receptor 1 (PRA1) from Mycosarcoma maydis (Corn smut fungus).